We begin with the raw amino-acid sequence, 92 residues long: MTRSVWKGPFVDAYVLKKAEKTRESGRNEVIKIWSRRSTILPQFVGLTFGVYNGRKHIPVNVTEDMIGQKFGEYSPTRTYYGHAADKKAKRK.

It belongs to the universal ribosomal protein uS19 family.

Protein S19 forms a complex with S13 that binds strongly to the 16S ribosomal RNA. The protein is Small ribosomal subunit protein uS19 of Dinoroseobacter shibae (strain DSM 16493 / NCIMB 14021 / DFL 12).